Reading from the N-terminus, the 86-residue chain is uncharacterized protein (86 aa).

This is an uncharacterized protein from Bacillus subtilis (strain 168).